A 1707-amino-acid polypeptide reads, in one-letter code: Latrophilin Cirl (1707 aa).

At 1–767 (MLPTILSISY…LFTMFDGNMR (767 aa)) the chain is on the extracellular side. The region spanning 25–114 (ACEGKKLTIE…KYLEAHYQCI (90 aa)) is the SUEL-type lectin domain. Asparagine 142 is a glycosylation site (N-linked (GlcNAc...) asparagine). The segment at 176-301 (GLFNVPPQHT…TAASGAVVPG (126 aa)) is disordered. 2 stretches are compositionally biased toward polar residues: residues 185–198 (TAVT…STTA) and 256–265 (NATSPSNTRI). Asparagine 256 carries an N-linked (GlcNAc...) asparagine glycan. The segment covering 275–285 (DDGTLLTTKSS) has biased composition (low complexity). N-linked (GlcNAc...) asparagine glycosylation is found at asparagine 302, asparagine 341, asparagine 398, asparagine 655, asparagine 703, and asparagine 730. The segment at 376-400 (YDEYDDDPSSTTPAPNGGDCLHNSS) is disordered. Positions 561–754 (RSVVQKVKNI…AILMDVVDEH (194 aa)) constitute a GAIN-B domain. Cystine bridges form between cysteine 709–cysteine 736 and cysteine 724–cysteine 738. Residues 709 to 754 (CVFWNYIDHAWSANGCSLESTNRTHSVCSCNHLTNFAILMDVVDEH) form a GPS region. The chain crosses the membrane as a helical span at residues 768–788 (IFIYISIGICVVFIVIALLTL). Topologically, residues 789-801 (KLFNGVFVKSART) are cytoplasmic. A helical membrane pass occupies residues 802 to 822 (SIYTSIYLCLLAIELLFLLGI). Over 823–828 (EQTETS) the chain is Extracellular. The helical transmembrane segment at 829 to 849 (IFCGFITIFLHCAILSGTAWF) threads the bilayer. At 850–875 (CYEAFHSYSTLTSDELLLEVDQTPKV) the chain is on the cytoplasmic side. The chain crosses the membrane as a helical span at residues 876 to 896 (NCYYLLSYGLSLSVVAISLVI). Residues 897 to 920 (DPSTYTQNDYCVLMEANALFYATF) are Extracellular-facing. Residues 921–941 (VIPVLVFFVAAIGYTFLSWII) form a helical membrane-spanning segment. Residues 942 to 968 (LCRKSRTGLKTKEHTRLASVRFDIRCS) lie on the Cytoplasmic side of the membrane. Residues 969 to 989 (FVFLLLLSAVWCSSYFYLRGA) form a helical membrane-spanning segment. Residues 990–999 (KMDDDTADVY) are Extracellular-facing. A helical membrane pass occupies residues 1000–1020 (GYCFICFNTLLGLYIFVFHCI). The Cytoplasmic segment spans residues 1021–1707 (QNEKIRREYR…VRCYLEPLAK (687 aa)). Serine 1156 carries the phosphoserine modification. Disordered stretches follow at residues 1169 to 1188 (AHKQ…GEGY) and 1236 to 1260 (KPNS…SGSL). Positions 1172–1181 (QQQQQQQQQQ) are enriched in low complexity. Residues serine 1255 and serine 1262 each carry the phosphoserine modification. Over residues 1316 to 1326 (QQLHQQQQQQL) the composition is skewed to low complexity. Disordered stretches follow at residues 1316-1335 (QQLH…QVEQ), 1450-1538 (GGGS…SDER), 1563-1582 (APLD…EHNG), and 1612-1687 (GGRL…QQRH). A phosphoserine mark is found at serine 1327 and serine 1328. The segment covering 1456–1481 (GGSVSSRSQQQQLKKQQQQQSLAQQR) has biased composition (low complexity). 2 stretches are compositionally biased toward acidic residues: residues 1489 to 1503 (DDDD…EEAT) and 1513 to 1526 (CDED…DLED). Residues 1635 to 1650 (QTPAQKRQQLQKLSPQ) show a composition bias toward polar residues. Over residues 1651-1673 (STTSSSSHTSHSNPNPHPLQLTH) the composition is skewed to low complexity. The segment covering 1674-1686 (PHPHQHPPHHQQR) has biased composition (basic residues).

Belongs to the G-protein coupled receptor 2 family. LN-TM7 subfamily. Forms a heterodimer, consisting of a large extracellular region non-covalently linked to a seven-transmembrane moiety. Post-translationally, proteolytically cleaved into 2 subunits, an extracellular subunit and a seven-transmembrane subunit.

It localises to the cell membrane. This chain is Latrophilin Cirl, found in Drosophila yakuba (Fruit fly).